The primary structure comprises 608 residues: uncharacterized protein (608 aa).

The tract at residues 1 to 21 is disordered; that stretch reads MHTNSPLRADNQDLETQPLLR. Thr24 is modified (phosphothreonine). Ser27 bears the Phosphoserine mark. The helical transmembrane segment at 55 to 75 threads the bilayer; it reads IIYLLGIVLLSFFGVSIVQYI. 9 N-linked (GlcNAc...) asparagine glycosylation sites follow: Asn115, Asn141, Asn169, Asn407, Asn425, Asn449, Asn453, Asn527, and Asn580.

It is found in the membrane. This is an uncharacterized protein from Saccharomyces cerevisiae (strain ATCC 204508 / S288c) (Baker's yeast).